We begin with the raw amino-acid sequence, 164 residues long: Endoribonuclease YbeY (164 aa).

3 residues coordinate Zn(2+): His-124, His-128, and His-134.

It belongs to the endoribonuclease YbeY family. Zn(2+) serves as cofactor.

Its subcellular location is the cytoplasm. Functionally, single strand-specific metallo-endoribonuclease involved in late-stage 70S ribosome quality control and in maturation of the 3' terminus of the 16S rRNA. The sequence is that of Endoribonuclease YbeY from Nitrosomonas europaea (strain ATCC 19718 / CIP 103999 / KCTC 2705 / NBRC 14298).